The primary structure comprises 518 residues: uncharacterized protein (518 aa).

This sequence belongs to the MG032/MG096/MG288 family.

This is an uncharacterized protein from Mycoplasma pneumoniae (strain ATCC 29342 / M129 / Subtype 1) (Mycoplasmoides pneumoniae).